Consider the following 613-residue polypeptide: UvrABC system protein C (613 aa).

The GIY-YIG domain occupies 13–92; it reads DKSGVYIMKD…IKKYKPKYNI (80 aa). The UVR domain maps to 204–239; sequence DEIINDLRIQMETAAEQLDFEKAAQLRNKITSIKQL.

This sequence belongs to the UvrC family. Interacts with UvrB in an incision complex.

It localises to the cytoplasm. Its function is as follows. The UvrABC repair system catalyzes the recognition and processing of DNA lesions. UvrC both incises the 5' and 3' sides of the lesion. The N-terminal half is responsible for the 3' incision and the C-terminal half is responsible for the 5' incision. The polypeptide is UvrABC system protein C (Ruminiclostridium cellulolyticum (strain ATCC 35319 / DSM 5812 / JCM 6584 / H10) (Clostridium cellulolyticum)).